The primary structure comprises 333 residues: Mitochondrial fission regulator 1 (333 aa).

A Phosphoserine modification is found at serine 119. Basic and acidic residues predominate over residues tyrosine 286 to serine 307. Residues tyrosine 286–histidine 315 are disordered.

This sequence belongs to the MTFR1 family.

It is found in the mitochondrion. In terms of biological role, may play a role in mitochondrial aerobic respiration. May also regulate mitochondrial organization and fission. In Pongo abelii (Sumatran orangutan), this protein is Mitochondrial fission regulator 1 (MTFR1).